Reading from the N-terminus, the 1790-residue chain is Non-reducing polyketide synthase gsfA (1790 aa).

The N-terminal acylcarrier protein transacylase domain (SAT) stretch occupies residues 20–263; that stretch reads GDQRTLFRKL…AMRKIQGMWH (244 aa). Residues 392 to 822 form the Ketosynthase family 3 (KS3) domain; it reads SSKIAVVGMS…GGNTAMIIEE (431 aa). Active-site for beta-ketoacyl synthase activity residues include cysteine 563, histidine 698, and histidine 741. A malonyl-CoA:ACP transacylase (MAT) domain region spans residues 922–1223; that stretch reads FAFAGQGTFY…CSTLHRDSDN (302 aa). The segment at 1298–1615 is product template (PT) domain; the sequence is TSSIHRLYSE…PRIMLNRFFQ (318 aa). Positions 1302–1435 are N-terminal hotdog fold; it reads HRLYSENYDS…AYYEDPSTWL (134 aa). In terms of domain architecture, PKS/mFAS DH spans 1302–1611; sequence HRLYSENYDS…FRQWPRIMLN (310 aa). The Proton acceptor; for dehydratase activity role is filled by histidine 1334. The C-terminal hotdog fold stretch occupies residues 1460–1611; it reads MANKLTTSLA…FRQWPRIMLN (152 aa). Catalysis depends on aspartate 1518, which acts as the Proton donor; for dehydratase activity. Disordered regions lie at residues 1621–1648 and 1686–1718; these read PPAPRVEKKRDAGRGTLPSSSSLQEKTT and LDYSLLTPRTSPNSDERIEKTDSDSGFEEADGA. Residues 1699 to 1708 show a composition bias toward basic and acidic residues; it reads SDERIEKTDS. The Carrier domain occupies 1716-1790; sequence DGANDVTSRA…TIGDLKKLLS (75 aa). The residue at position 1753 (serine 1753) is an O-(pantetheine 4'-phosphoryl)serine.

The catalysed reaction is 6 malonyl-CoA + acetyl-CoA + 4 H(+) = 2-(2,4-dihydroxy-6-oxidobenzoyl)-5-hydroxy-3-methylbenzenolate + 6 CO2 + 7 CoA + H2O. The protein operates within secondary metabolite biosynthesis; terpenoid biosynthesis. In terms of biological role, norlichexanthone synthase; part of the gene cluster that mediates the biosynthesis of griseofulvin, an important antifungal drug that has been in use for a long time for treating dermatophyte infections. The first step of the pathway is the formation of the heptaketide backbone by gsfA which is initiated by priming with acetyl-CoA, followed by sequential condensations of 6 malonyl-CoA units. The resulting benzophenone can undergo a spontaneous dehydration to form norlichexanthone. However, the true precursor for the griseofulvin biosynthesis is not norlichexanthone, but the heptaketide benzophenone that is O-methylated at 3-OH by gsfB to produce griseophenone D which is further methylated at 9-OH by gsfC to yield griseophenone C. Griseophenone C is then substrate of halogenase gsfI which is responsible for the regio-specific chlorination at the C13 position to form griseophenone B. The cytochrome P450 gsfF catalyzes the coupling of orcinol and phloroglucinol rings in griseophenone B to form desmethyl-dehydrogriseofulvin A which is further methylated at 5-OH by gsfD to yield dehydrogriseofulvin. Finally, gsfE performs stereospecific reduction of enone 18 of dehydrogriseofulvin to afford the final product griseofulvin. This chain is Non-reducing polyketide synthase gsfA, found in Penicillium aethiopicum.